Reading from the N-terminus, the 282-residue chain is Pantothenate synthetase (282 aa).

28-35 provides a ligand contact to ATP; sequence MGALHSGH. Catalysis depends on His-35, which acts as the Proton donor. Residue Gln-59 participates in (R)-pantoate binding. Gln-59 lines the beta-alanine pocket. An ATP-binding site is contributed by 146-149; sequence GEKD. Gln-152 contributes to the (R)-pantoate binding site. ATP contacts are provided by residues Val-175 and 183–186; that span reads LSSR.

The protein belongs to the pantothenate synthetase family. As to quaternary structure, homodimer.

It localises to the cytoplasm. It carries out the reaction (R)-pantoate + beta-alanine + ATP = (R)-pantothenate + AMP + diphosphate + H(+). It participates in cofactor biosynthesis; (R)-pantothenate biosynthesis; (R)-pantothenate from (R)-pantoate and beta-alanine: step 1/1. Its function is as follows. Catalyzes the condensation of pantoate with beta-alanine in an ATP-dependent reaction via a pantoyl-adenylate intermediate. This is Pantothenate synthetase from Salinispora arenicola (strain CNS-205).